The sequence spans 660 residues: MKAVIFAYHDMGCVGVTALINAGYTIEAIITHPDAPSEKTFFGSVARIAAEHNIPVFVPDDVNHPLWIARIKALAPDVIFSFYYRQLLCQDILSLPTVGAFNLHGSLLPRYRGRSPLNWVLVNGEQETGVTLHRMTARADAGAILAQRSVAITLQDDALTLHRKLCEAAAGVLEKVLPAIREQRCTETPQDESIASYVGHRTPEDGRIDWGQPAATLANLVRAVTDPWPGAFSYAGGEKFIIWKAQVRPNSADAQPGTVLSIDPLVIACGSDALEVQTGQSQQGVYMQGGQLAHALGLVKGALLNPRPLVSHKRRTRVLILGVNGFIGNHLTERLLRDGNYEIYGLDIGTDAISRFMVNPLFHFVEGDISIHSEWIEYHIKKCDIVLPLVAIATPIEYTRNPLRVFELDFEENLKIIRHCVKYQKRIIFPSTSEVYGMCTDPVFDEDDSSLIVGPINKQRWIYSVSKQLLDRVLWAYGEKEGLRFTLFRPFNWMGPRLDNLNAARIGSSRAITQLILNLVEGSHIKLVDGGAQKRCFTDISDGIEALFRIIENKDNNCDGQIINIGNPDNEASIRQLAELLLASFERHPLRQHFPPFAGFRDVESSSYYGKGYQDVEHRKPSIRNAKRLLGWAPSVPMAQTIDETLDFFLQTVDLPDAAQ.

The tract at residues M1 to L304 is formyltransferase ArnAFT. The active-site Proton donor; for formyltransferase activity is the H104. Residues R114 and T136 to D140 each bind (6R)-10-formyltetrahydrofolate. The tract at residues R314 to Q660 is dehydrogenase ArnADH. Residues D347 and D368–I369 contribute to the NAD(+) site. UDP-alpha-D-glucuronate contacts are provided by residues A393, Y398, and T432 to S433. E434 functions as the Proton acceptor; for decarboxylase activity in the catalytic mechanism. UDP-alpha-D-glucuronate is bound by residues R460, N492, K526 to R535, and Y613. The active-site Proton donor; for decarboxylase activity is the R619.

This sequence in the N-terminal section; belongs to the Fmt family. UDP-L-Ara4N formyltransferase subfamily. The protein in the C-terminal section; belongs to the NAD(P)-dependent epimerase/dehydratase family. UDP-glucuronic acid decarboxylase subfamily. As to quaternary structure, homohexamer, formed by a dimer of trimers.

The enzyme catalyses UDP-alpha-D-glucuronate + NAD(+) = UDP-beta-L-threo-pentopyranos-4-ulose + CO2 + NADH. It catalyses the reaction UDP-4-amino-4-deoxy-beta-L-arabinose + (6R)-10-formyltetrahydrofolate = UDP-4-deoxy-4-formamido-beta-L-arabinose + (6S)-5,6,7,8-tetrahydrofolate + H(+). Its pathway is nucleotide-sugar biosynthesis; UDP-4-deoxy-4-formamido-beta-L-arabinose biosynthesis; UDP-4-deoxy-4-formamido-beta-L-arabinose from UDP-alpha-D-glucuronate: step 1/3. It functions in the pathway nucleotide-sugar biosynthesis; UDP-4-deoxy-4-formamido-beta-L-arabinose biosynthesis; UDP-4-deoxy-4-formamido-beta-L-arabinose from UDP-alpha-D-glucuronate: step 3/3. It participates in bacterial outer membrane biogenesis; lipopolysaccharide biosynthesis. In terms of biological role, bifunctional enzyme that catalyzes the oxidative decarboxylation of UDP-glucuronic acid (UDP-GlcUA) to UDP-4-keto-arabinose (UDP-Ara4O) and the addition of a formyl group to UDP-4-amino-4-deoxy-L-arabinose (UDP-L-Ara4N) to form UDP-L-4-formamido-arabinose (UDP-L-Ara4FN). The modified arabinose is attached to lipid A and is required for resistance to polymyxin and cationic antimicrobial peptides. The sequence is that of Bifunctional polymyxin resistance protein ArnA from Sodalis glossinidius (strain morsitans).